We begin with the raw amino-acid sequence, 251 residues long: uncharacterized protein (251 aa).

A signal peptide spans 1-18; it reads MRILIILSIILCSFFARA.

The protein belongs to the MlaA family.

This is an uncharacterized protein from Rickettsia typhi (strain ATCC VR-144 / Wilmington).